The sequence spans 198 residues: Holliday junction branch migration complex subunit RuvA (198 aa).

The segment at 1–64 is domain I; that stretch reads MYEYIKGEYM…EDFIGLYGFE (64 aa). Residues 65-143 form a domain II region; that stretch reads SLEELDMFKL…SDELLNCIDE (79 aa). A flexible linker region spans residues 144-154; that stretch reads FDDVTQDNSLA. The segment at 154–198 is domain III; the sequence is ALSEALSALISLGYTEKEAEKVLKDVDKSESVENIIKSALVKLMG.

The protein belongs to the RuvA family. Homotetramer. Forms an RuvA(8)-RuvB(12)-Holliday junction (HJ) complex. HJ DNA is sandwiched between 2 RuvA tetramers; dsDNA enters through RuvA and exits via RuvB. An RuvB hexamer assembles on each DNA strand where it exits the tetramer. Each RuvB hexamer is contacted by two RuvA subunits (via domain III) on 2 adjacent RuvB subunits; this complex drives branch migration. In the full resolvosome a probable DNA-RuvA(4)-RuvB(12)-RuvC(2) complex forms which resolves the HJ.

Its subcellular location is the cytoplasm. In terms of biological role, the RuvA-RuvB-RuvC complex processes Holliday junction (HJ) DNA during genetic recombination and DNA repair, while the RuvA-RuvB complex plays an important role in the rescue of blocked DNA replication forks via replication fork reversal (RFR). RuvA specifically binds to HJ cruciform DNA, conferring on it an open structure. The RuvB hexamer acts as an ATP-dependent pump, pulling dsDNA into and through the RuvAB complex. HJ branch migration allows RuvC to scan DNA until it finds its consensus sequence, where it cleaves and resolves the cruciform DNA. This Clostridium botulinum (strain Alaska E43 / Type E3) protein is Holliday junction branch migration complex subunit RuvA.